A 365-amino-acid polypeptide reads, in one-letter code: Cobalt-precorrin-5B C(1)-methyltransferase (365 aa).

It belongs to the CbiD family.

It carries out the reaction Co-precorrin-5B + S-adenosyl-L-methionine = Co-precorrin-6A + S-adenosyl-L-homocysteine. The protein operates within cofactor biosynthesis; adenosylcobalamin biosynthesis; cob(II)yrinate a,c-diamide from sirohydrochlorin (anaerobic route): step 6/10. In terms of biological role, catalyzes the methylation of C-1 in cobalt-precorrin-5B to form cobalt-precorrin-6A. This Methanococcus maripaludis (strain DSM 14266 / JCM 13030 / NBRC 101832 / S2 / LL) protein is Cobalt-precorrin-5B C(1)-methyltransferase.